Reading from the N-terminus, the 384-residue chain is MWPESAESPAPLRTGLTTGTCATACCVAAAQALFADQQAASVSVTLPKGKVVDLPIIEYQTIDAGMKTSTIKDAGDDPDATHGATLFVELRLSPEQGVRFRAAQGVGIVTRTGLLLDVGEPAINPVPRKMMTEHLKGFAQTYHYQGGFDVSVGVINGEQIAQKTMNPRLGILGGLSILGTTGIVRPFSCAAYIASIHQGIDVARANGLTHIAATTGNASEDAIKSHYQLDDMALIEMGDFVGAVLKHIKKVEQADFAKLNSSTQLQTLSICGGFGKISKLAQHHMDLNSRASSIDLGALAKLAASLGADNALQERMTKANTSVEALSFAISDGLPLADAICQQALDFARQYIPAHIALEVWAIDRKGQFVGKALDADNSKRDEP.

It belongs to the CbiD family.

It carries out the reaction Co-precorrin-5B + S-adenosyl-L-methionine = Co-precorrin-6A + S-adenosyl-L-homocysteine. It functions in the pathway cofactor biosynthesis; adenosylcobalamin biosynthesis; cob(II)yrinate a,c-diamide from sirohydrochlorin (anaerobic route): step 6/10. Its function is as follows. Catalyzes the methylation of C-1 in cobalt-precorrin-5B to form cobalt-precorrin-6A. The protein is Cobalt-precorrin-5B C(1)-methyltransferase of Marinomonas sp. (strain MWYL1).